The primary structure comprises 510 residues: 2,3-bisphosphoglycerate-independent phosphoglycerate mutase (510 aa).

Residues aspartate 16 and serine 66 each coordinate Mn(2+). Catalysis depends on serine 66, which acts as the Phosphoserine intermediate. Substrate-binding positions include histidine 127, 156 to 157 (RD), arginine 186, arginine 192, 257 to 260 (RADR), and lysine 333. The Mn(2+) site is built by aspartate 400, histidine 404, aspartate 441, histidine 442, and histidine 460.

The protein belongs to the BPG-independent phosphoglycerate mutase family. In terms of assembly, monomer. Requires Mn(2+) as cofactor.

The catalysed reaction is (2R)-2-phosphoglycerate = (2R)-3-phosphoglycerate. The protein operates within carbohydrate degradation; glycolysis; pyruvate from D-glyceraldehyde 3-phosphate: step 3/5. Its function is as follows. Catalyzes the interconversion of 2-phosphoglycerate and 3-phosphoglycerate. This is 2,3-bisphosphoglycerate-independent phosphoglycerate mutase from Gluconobacter oxydans (strain 621H) (Gluconobacter suboxydans).